A 1169-amino-acid chain; its full sequence is Topoisomerase 1-associated factor 1 (1169 aa).

Disordered stretches follow at residues 573-600 (RRKAKDVEGTGNDENDEENGSEDEDRLE) and 900-1150 (YGGG…DAPI). 2 stretches are compositionally biased toward acidic residues: residues 583–599 (GNDENDEENGSEDEDRL) and 917–928 (FGDDSEGEDEVP). Pro residues predominate over residues 931-940 (PLFPPNPRAA). Positions 958–972 (PDDEDEDDSVDEETL) are enriched in acidic residues. Composition is skewed to basic and acidic residues over residues 973 to 1000 (EERRRARLENSRARLAKIKSDLYVHASD) and 1009 to 1024 (KEFFLLEEQRRREQAK). Acidic residues predominate over residues 1100-1112 (GEEDDGFNFDDDL). A compositionally biased stretch (basic and acidic residues) spans 1113–1140 (VFSRDREKLLGSAGNEEKDSNRPDKAMA).

This sequence belongs to the timeless family.

It localises to the nucleus. In terms of biological role, involved in chromosome segregation during meiosis and DNA damage repair. In Aspergillus niger (strain ATCC MYA-4892 / CBS 513.88 / FGSC A1513), this protein is Topoisomerase 1-associated factor 1 (tof1).